The chain runs to 550 residues: MANSQRSSSLIDPRNGFCTSNSTFYSKRKPLALPSKESLDITTFISSQTYRGKTAFIDAATDHRISFSDLWMAVDRVADCLLHDVGIRRGDVVLVLSPNTISIPIVCLSVMSLGAVLTTANPLNTASEILRQIADSNPKLAFTTPELAPKIASSGISIVLERVEDTLRVPRGLKVVGNLTEMMKKEPSGQAVRNQVHKDDTAMLLYSSGTTGRSKGVNSSHGNLIAHVARYIAEPFEQPQQTFICTVPLFHTFGLLNFVLATLALGTTVVILPRFDLGEMMAAVEKYRATTLILVPPVLVTMINKADQIMKKYDVSFLRTVRCGGAPLSKEVTQGFMKKYPTVDVYQGYALTESNGAGASIESVEESRRYGAVGLLSCGVEARIVDPNTGQVMGLNQTGELWLKGPSIAKGYFRNEEEIITSEGWLKTGDLCYIDNDGFLFIVDRLKELIKYKGYQVPPAELEALLLNHPDILDAAVIPFPDKEAGQFPMAYVARKPESNLCEKKVIDFISKQVAPYKKIRKVAFIDSIPKTPSGKTLRKDLIKFAISKI.

Residues serine 207, serine 208, glycine 209, threonine 210, threonine 211, and lysine 215 each coordinate ATP. Phenylalanine 253 serves as a coordination point for (E)-4-coumaroyl-AMP. Arginine 274 provides a ligand contact to CoA. Residues 276-347 (DLGEMMAAVE…KKYPTVDVYQ (72 aa)) are SBD1. (E)-4-coumaroyl-AMP contacts are provided by glycine 325, glutamine 347, glycine 348, and threonine 352. Residues glutamine 347, glycine 348, threonine 352, aspartate 430, and arginine 445 each coordinate ATP. Residues 348-412 (GYALTESNGA…LKGPSIAKGY (65 aa)) form an SBD2 region. (E)-4-coumaroyl-AMP-binding residues include lysine 447 and lysine 451. CoA-binding residues include lysine 453 and glycine 454. ATP is bound at residue lysine 536. The Microbody targeting signal motif lies at 548–550 (SKI).

It belongs to the ATP-dependent AMP-binding enzyme family. The cofactor is Mg(2+).

It localises to the peroxisome. It catalyses the reaction (E)-4-coumarate + ATP + CoA = (E)-4-coumaroyl-CoA + AMP + diphosphate. The enzyme catalyses (E)-4-coumarate + ATP + H(+) = (E)-4-coumaroyl-AMP + diphosphate. It carries out the reaction (E)-4-coumaroyl-AMP + CoA = (E)-4-coumaroyl-CoA + AMP + H(+). Functionally, carboxylate--CoA ligase that may use 4-coumarate as substrate. Follows a two-step reaction mechanism, wherein the carboxylate substrate first undergoes adenylation by ATP, followed by a thioesterification in the presence of CoA to yield the final CoA thioester. The protein is 4-coumarate--CoA ligase-like 8 of Arabidopsis thaliana (Mouse-ear cress).